A 141-amino-acid chain; its full sequence is Superoxide dismutase [Cu-Zn], chloroplastic (141 aa).

Cu cation-binding residues include His33, His35, and His50. Residues Cys44 and Cys133 are joined by a disulfide bond. Zn(2+) contacts are provided by His50, His58, His67, and Asp70. His107 serves as a coordination point for Cu cation.

Belongs to the Cu-Zn superoxide dismutase family. Homotetramer. Requires Cu cation as cofactor. Zn(2+) serves as cofactor.

It localises to the plastid. It is found in the chloroplast. The enzyme catalyses 2 superoxide + 2 H(+) = H2O2 + O2. Its function is as follows. Destroys radicals which are normally produced within the cells and which are toxic to biological systems. The polypeptide is Superoxide dismutase [Cu-Zn], chloroplastic (SODCP) (Pinus sylvestris (Scotch pine)).